Reading from the N-terminus, the 368-residue chain is Serine/threonine-protein kinase CAK1 (368 aa).

The 368-residue stretch at 1–368 folds into the Protein kinase domain; the sequence is MKLDSIDITH…QRILQELEKP (368 aa). The Proton acceptor role is filled by aspartate 156.

This sequence belongs to the protein kinase superfamily. CMGC Ser/Thr protein kinase family. CDC2/CDKX subfamily.

The enzyme catalyses L-seryl-[protein] + ATP = O-phospho-L-seryl-[protein] + ADP + H(+). It catalyses the reaction L-threonyl-[protein] + ATP = O-phospho-L-threonyl-[protein] + ADP + H(+). In Saccharomyces cerevisiae (strain ATCC 204508 / S288c) (Baker's yeast), this protein is Serine/threonine-protein kinase CAK1 (CAK1).